Consider the following 250-residue polypeptide: 2,3-bisphosphoglycerate-dependent phosphoglycerate mutase (250 aa).

Substrate contacts are provided by residues 10 to 17, 23 to 24, arginine 62, 89 to 92, lysine 100, 116 to 117, and 185 to 186; these read RHGESVWN, TG, ERHY, RR, and GN. Catalysis depends on histidine 11, which acts as the Tele-phosphohistidine intermediate. The active-site Proton donor/acceptor is glutamate 89.

This sequence belongs to the phosphoglycerate mutase family. BPG-dependent PGAM subfamily. Homodimer.

It carries out the reaction (2R)-2-phosphoglycerate = (2R)-3-phosphoglycerate. It functions in the pathway carbohydrate degradation; glycolysis; pyruvate from D-glyceraldehyde 3-phosphate: step 3/5. In terms of biological role, catalyzes the interconversion of 2-phosphoglycerate and 3-phosphoglycerate. This is 2,3-bisphosphoglycerate-dependent phosphoglycerate mutase from Proteus mirabilis (strain HI4320).